We begin with the raw amino-acid sequence, 118 residues long: Large ribosomal subunit protein bL19 (118 aa).

Belongs to the bacterial ribosomal protein bL19 family.

In terms of biological role, this protein is located at the 30S-50S ribosomal subunit interface and may play a role in the structure and function of the aminoacyl-tRNA binding site. This is Large ribosomal subunit protein bL19 from Helicobacter pylori (strain P12).